The chain runs to 201 residues: Holliday junction branch migration complex subunit RuvA (201 aa).

The segment at 1-64 (MIGRLHGKII…EDAHLLFGFA (64 aa)) is domain I. The segment at 65–143 (QKQDRTLFRE…GVAQSDFFEE (79 aa)) is domain II. Positions 144 to 154 (HSVETIVATHS) are flexible linker. Residues 154-201 (SHDPADEARDALVALGYKLADAEKMIKKVNKAGATSEQLIREALKASL) are domain III.

Belongs to the RuvA family. As to quaternary structure, homotetramer. Forms an RuvA(8)-RuvB(12)-Holliday junction (HJ) complex. HJ DNA is sandwiched between 2 RuvA tetramers; dsDNA enters through RuvA and exits via RuvB. An RuvB hexamer assembles on each DNA strand where it exits the tetramer. Each RuvB hexamer is contacted by two RuvA subunits (via domain III) on 2 adjacent RuvB subunits; this complex drives branch migration. In the full resolvosome a probable DNA-RuvA(4)-RuvB(12)-RuvC(2) complex forms which resolves the HJ.

Its subcellular location is the cytoplasm. In terms of biological role, the RuvA-RuvB-RuvC complex processes Holliday junction (HJ) DNA during genetic recombination and DNA repair, while the RuvA-RuvB complex plays an important role in the rescue of blocked DNA replication forks via replication fork reversal (RFR). RuvA specifically binds to HJ cruciform DNA, conferring on it an open structure. The RuvB hexamer acts as an ATP-dependent pump, pulling dsDNA into and through the RuvAB complex. HJ branch migration allows RuvC to scan DNA until it finds its consensus sequence, where it cleaves and resolves the cruciform DNA. The sequence is that of Holliday junction branch migration complex subunit RuvA from Actinobacillus pleuropneumoniae serotype 5b (strain L20).